The chain runs to 1154 residues: DNA-directed RNA polymerase subunit beta (1154 aa).

Over residues 1108–1123 the composition is skewed to basic and acidic residues; that stretch reads ELGIDIQGEDRSERAG. The disordered stretch occupies residues 1108-1136; sequence ELGIDIQGEDRSERAGEPASPDEMDDEEE. Residues 1127 to 1136 are compositionally biased toward acidic residues; it reads SPDEMDDEEE.

Belongs to the RNA polymerase beta chain family. In terms of assembly, the RNAP catalytic core consists of 2 alpha, 1 beta, 1 beta' and 1 omega subunit. When a sigma factor is associated with the core the holoenzyme is formed, which can initiate transcription.

It catalyses the reaction RNA(n) + a ribonucleoside 5'-triphosphate = RNA(n+1) + diphosphate. DNA-dependent RNA polymerase catalyzes the transcription of DNA into RNA using the four ribonucleoside triphosphates as substrates. The sequence is that of DNA-directed RNA polymerase subunit beta from Heliobacterium modesticaldum (strain ATCC 51547 / Ice1).